The chain runs to 370 residues: GTPase Obg (370 aa).

The Obg domain maps to 1-159 (MKFIDEARIE…RMLRLELKVL (159 aa)). The region spanning 160–334 (ADVGLLGMPN…LCYAIYDYLA (175 aa)) is the OBG-type G domain. GTP contacts are provided by residues 166–173 (GMPNAGKS), 191–195 (FTTLA), 213–216 (DIPG), 284–287 (NKLD), and 315–317 (SAL). Positions 173 and 193 each coordinate Mg(2+). Residues 344–370 (EEEDLATDVRFRDAPPADGGATPGDDA) form a disordered region.

This sequence belongs to the TRAFAC class OBG-HflX-like GTPase superfamily. OBG GTPase family. As to quaternary structure, monomer. The cofactor is Mg(2+).

Its subcellular location is the cytoplasm. Functionally, an essential GTPase which binds GTP, GDP and possibly (p)ppGpp with moderate affinity, with high nucleotide exchange rates and a fairly low GTP hydrolysis rate. Plays a role in control of the cell cycle, stress response, ribosome biogenesis and in those bacteria that undergo differentiation, in morphogenesis control. This is GTPase Obg from Burkholderia ambifaria (strain ATCC BAA-244 / DSM 16087 / CCUG 44356 / LMG 19182 / AMMD) (Burkholderia cepacia (strain AMMD)).